Here is a 218-residue protein sequence, read N- to C-terminus: N-(5'-phosphoribosyl)anthranilate isomerase (218 aa).

The protein belongs to the TrpF family.

It carries out the reaction N-(5-phospho-beta-D-ribosyl)anthranilate = 1-(2-carboxyphenylamino)-1-deoxy-D-ribulose 5-phosphate. It participates in amino-acid biosynthesis; L-tryptophan biosynthesis; L-tryptophan from chorismate: step 3/5. This is N-(5'-phosphoribosyl)anthranilate isomerase from Rhodopseudomonas palustris (strain BisB18).